Reading from the N-terminus, the 374-residue chain is 4-hydroxybenzoate polyprenyltransferase, mitochondrial (374 aa).

The N-terminal 34 residues, 1 to 34 (MLRWGGAGLARGLRAVRSAWLRGPRGLPLALVRS), are a transit peptide targeting the mitochondrion. Residues 35-83 (AGVPGARDRRAPAPGTQRGRALSLSAAAVVNSAPRPLQPYLRLMRLDKP) lie on the Mitochondrial matrix side of the membrane. The helical transmembrane segment at 84–104 (IGTWLLYLPCTWSIGLAADPG) threads the bilayer. The Mitochondrial intermembrane portion of the chain corresponds to 105 to 108 (CFPD). A helical transmembrane segment spans residues 109 to 129 (WYMLSLFGTGAILMRGAGCTI). Residues 130–148 (NDMWDRDFDKKVTRTANRP) are Mitochondrial matrix-facing. A helical membrane pass occupies residues 149–169 (IAAGDISTFQSFVFLGGQLTL). Residues 170 to 172 (ALG) lie on the Mitochondrial intermembrane side of the membrane. Residues 173–193 (VLLCLNYYSIAMGAASLLLVV) traverse the membrane as a helical segment. Over 194-200 (TYPLVKR) the chain is Mitochondrial matrix. The helical transmembrane segment at 201-221 (ITFWPQLALGLTFNWGALLGW) threads the bilayer. Residues 222-230 (SAVKGSCDP) are Mitochondrial intermembrane-facing. Residues 231–251 (AVCLPLYFSGVMWTLIYDTIY) form a helical membrane-spanning segment. Topologically, residues 252–277 (AHQDKKDDALIGLKSTALLFQENTRQ) are mitochondrial matrix. A helical membrane pass occupies residues 278–298 (WLSGFGVAMVAALSLAGANNG). At 299 to 332 (QTVPYYAAVAAVGAHLAHQIYTVDIHRAEDCWDK) the chain is on the mitochondrial intermembrane side. Residues 333–353 (FTSNRTVGMLLFLGIVLGNLC) form a helical membrane-spanning segment. At 354 to 374 (KEKTEEAKDAEAVRVGSEQTS) the chain is on the mitochondrial matrix side.

This sequence belongs to the UbiA prenyltransferase family. The cofactor is Mg(2+).

It localises to the mitochondrion inner membrane. The catalysed reaction is an all-trans-polyprenyl diphosphate + 4-hydroxybenzoate = a 4-hydroxy-3-(all-trans-polyprenyl)benzoate + diphosphate. It carries out the reaction all-trans-decaprenyl diphosphate + 4-hydroxybenzoate = 4-hydroxy-3-(all-trans-decaprenyl)benzoate + diphosphate. The enzyme catalyses all-trans-nonaprenyl diphosphate + 4-hydroxybenzoate = 4-hydroxy-3-(all-trans-nonaprenyl)benzoate + diphosphate. The protein operates within cofactor biosynthesis; ubiquinone biosynthesis. Mediates the second step in the final reaction sequence of coenzyme Q (CoQ) biosynthesis. Catalyzes the prenylation of para-hydroxybenzoate (PHB) with an all-trans polyprenyl donor (such as all-trans-nonaprenyl diphosphate). The length of the polyprenyl side chain varies depending on the species, in humans, the side chain is comprised of 10 isoprenyls producing CoQ10 (also known as ubiquinone), whereas rodents predominantly generate CoQ9. However, this specificity is not complete, human tissues have low amounts of CoQ9 and rodent organs contain some CoQ10. Plays a central role in the biosynthesis of CoQ9. CoQ9 is a vital molecule that transports electrons from mitochondrial respiratory chain complexes. CoQs also function as cofactors for uncoupling protein and play a role as regulators of the extracellularly-induced ceramide-dependent apoptotic pathway. Regulates mitochondrial permeability transition pore (mPTP) opening and ROS production (pivotal events in cell death) in a tissue specific manner. The protein is 4-hydroxybenzoate polyprenyltransferase, mitochondrial of Mus musculus (Mouse).